The following is a 389-amino-acid chain: Type III polyketide synthase 21 (389 aa).

Cys-170 (nucleophile) is an active-site residue.

Belongs to the thiolase-like superfamily. Chalcone/stilbene synthases family. In terms of tissue distribution, expressed in anthers. Expressed in young and adult flowers.

In terms of biological role, plant type III polyketide synthases (PKSs) that catalyzes the condensation of fatty acyl-CoA with malonyl-CoA to generate triketide and tetraketide alpha-pyrones, the main components of pollen exine and potential sporopollenin precursors. The sequence is that of Type III polyketide synthase 21 (PKS21) from Oryza sativa subsp. japonica (Rice).